Reading from the N-terminus, the 210-residue chain is Prolactin (210 aa).

Residues 1-23 form the signal peptide; sequence MTQGSRLYFAVAVLMCGFVSING. 2 disulfides stabilise this stretch: cysteine 69/cysteine 183 and cysteine 200/cysteine 210.

Belongs to the somatotropin/prolactin family. Pituitary gland.

Its subcellular location is the secreted. The chain is Prolactin (prl1) from Carassius auratus (Goldfish).